Here is a 521-residue protein sequence, read N- to C-terminus: Probable glycine dehydrogenase (decarboxylating) subunit 2 (521 aa).

Lysine 279 is modified (N6-(pyridoxal phosphate)lysine).

It belongs to the GcvP family. C-terminal subunit subfamily. In terms of assembly, the glycine cleavage system is composed of four proteins: P, T, L and H. In this organism, the P 'protein' is a heterodimer of two subunits. Requires pyridoxal 5'-phosphate as cofactor.

The enzyme catalyses N(6)-[(R)-lipoyl]-L-lysyl-[glycine-cleavage complex H protein] + glycine + H(+) = N(6)-[(R)-S(8)-aminomethyldihydrolipoyl]-L-lysyl-[glycine-cleavage complex H protein] + CO2. The glycine cleavage system catalyzes the degradation of glycine. The P protein binds the alpha-amino group of glycine through its pyridoxal phosphate cofactor; CO(2) is released and the remaining methylamine moiety is then transferred to the lipoamide cofactor of the H protein. This chain is Probable glycine dehydrogenase (decarboxylating) subunit 2, found in Staphylothermus marinus (strain ATCC 43588 / DSM 3639 / JCM 9404 / F1).